The sequence spans 640 residues: 5-aminolevulinate synthase, non-specific, mitochondrial (640 aa).

Residues 1–56 (METVVRSCPFLSRVPQAFLQKAGKSLLFYAQNCPKMMEVGAKPAPRALSTAAVHYQ) constitute a mitochondrion transit peptide. Disordered stretches follow at residues 60–103 (ETPP…TSQG) and 143–163 (EVAE…GGDP). Residues 75 to 92 (VQQTPDGSQQSPDGTQLP) show a composition bias toward polar residues. Arg217, Ser334, and Lys353 together coordinate substrate. 3 residues coordinate pyridoxal 5'-phosphate: Ser386, His414, and Thr442. Lys445 is a catalytic residue. Position 445 is an N6-(pyridoxal phosphate)lysine (Lys445). Residues Thr474 and Thr475 each contribute to the pyridoxal 5'-phosphate site. Thr562 serves as a coordination point for substrate. Hydroxyproline is present on Pro576.

The protein belongs to the class-II pyridoxal-phosphate-dependent aminotransferase family. In terms of assembly, homodimer. Interacts (hydroxylated form) with VHL. The cofactor is pyridoxal 5'-phosphate. Post-translationally, in normoxia, is hydroxylated at Pro-576, promoting interaction with VHL, initiating ubiquitination and subsequent degradation via the proteasome. In terms of processing, ubiquitinated; in normoxia following hydroxylation and interaction with VHL, leading to its subsequent degradation via the proteasome.

The protein localises to the mitochondrion inner membrane. The catalysed reaction is succinyl-CoA + glycine + H(+) = 5-aminolevulinate + CO2 + CoA. Its pathway is porphyrin-containing compound metabolism; protoporphyrin-IX biosynthesis; 5-aminolevulinate from glycine: step 1/1. Functionally, catalyzes the pyridoxal 5'-phosphate (PLP)-dependent condensation of succinyl-CoA and glycine to form aminolevulinic acid (ALA), with CoA and CO2 as by-products. The chain is 5-aminolevulinate synthase, non-specific, mitochondrial (ALAS1) from Pongo abelii (Sumatran orangutan).